The following is a 227-amino-acid chain: Ribose-5-phosphate isomerase A (227 aa).

Substrate contacts are provided by residues Thr26–Thr29, Asp82–Asp85, and Lys95–Gly98. Glu104 functions as the Proton acceptor in the catalytic mechanism. Lys122 serves as a coordination point for substrate.

It belongs to the ribose 5-phosphate isomerase family. As to quaternary structure, homodimer.

The catalysed reaction is aldehydo-D-ribose 5-phosphate = D-ribulose 5-phosphate. The protein operates within carbohydrate degradation; pentose phosphate pathway; D-ribose 5-phosphate from D-ribulose 5-phosphate (non-oxidative stage): step 1/1. Its function is as follows. Catalyzes the reversible conversion of ribose-5-phosphate to ribulose 5-phosphate. The protein is Ribose-5-phosphate isomerase A of Streptococcus pyogenes serotype M28 (strain MGAS6180).